A 506-amino-acid chain; its full sequence is Adenylosuccinate synthetase (506 aa).

GTP-binding positions include 35–41 and 63–65; these read GDEGKGK and GHT. Catalysis depends on aspartate 36, which acts as the Proton acceptor. The Mg(2+) site is built by aspartate 36 and glycine 63. IMP-binding positions include 36–39, 61–64, threonine 212, arginine 226, asparagine 304, threonine 319, and arginine 383; these read DEGK and NAGH. The active-site Proton donor is histidine 64. Position 379 to 385 (379 to 385) interacts with substrate; the sequence is VTTKRKR. GTP contacts are provided by residues arginine 385, 411–413, and 494–496; these read KLD and GVG.

Belongs to the adenylosuccinate synthetase family. Homodimer. It depends on Mg(2+) as a cofactor.

It is found in the cytoplasm. It carries out the reaction IMP + L-aspartate + GTP = N(6)-(1,2-dicarboxyethyl)-AMP + GDP + phosphate + 2 H(+). Its pathway is purine metabolism; AMP biosynthesis via de novo pathway; AMP from IMP: step 1/2. Its function is as follows. Plays an important role in the de novo pathway and in the salvage pathway of purine nucleotide biosynthesis. Catalyzes the first committed step in the biosynthesis of AMP from IMP. The protein is Adenylosuccinate synthetase of Drosophila yakuba (Fruit fly).